A 442-amino-acid chain; its full sequence is 26S proteasome regulatory subunit 6A (442 aa).

Position 12 is a phosphoserine (Ser12). Gly230–Thr237 contacts ATP. Ser379 carries the post-translational modification Phosphoserine.

Belongs to the AAA ATPase family. As to quaternary structure, component of the 19S proteasome regulatory particle complex. The 26S proteasome consists of a 20S core particle (CP) and two 19S regulatory subunits (RP). The regulatory particle is made of a lid composed of 9 subunits, a base containing 6 ATPases including PSMC3 and few additional components. Interacts with PAAF1.

It is found in the cytoplasm. The protein localises to the nucleus. Component of the 26S proteasome, a multiprotein complex involved in the ATP-dependent degradation of ubiquitinated proteins. This complex plays a key role in the maintenance of protein homeostasis by removing misfolded or damaged proteins, which could impair cellular functions, and by removing proteins whose functions are no longer required. Therefore, the proteasome participates in numerous cellular processes, including cell cycle progression, apoptosis, or DNA damage repair. PSMC3 belongs to the heterohexameric ring of AAA (ATPases associated with diverse cellular activities) proteins that unfolds ubiquitinated target proteins that are concurrently translocated into a proteolytic chamber and degraded into peptides. The sequence is that of 26S proteasome regulatory subunit 6A (Psmc3) from Mus musculus (Mouse).